A 119-amino-acid polypeptide reads, in one-letter code: Fluoride-specific ion channel FluC (119 aa).

Helical transmembrane passes span 5–25 (IIPL…LNLA), 34–54 (TGNL…AETI), 59–79 (WKLL…GFSL), and 97–117 (IFLH…IGAA). Na(+) contacts are provided by G69 and T72.

The protein belongs to the fluoride channel Fluc/FEX (TC 1.A.43) family.

It localises to the cell inner membrane. It catalyses the reaction fluoride(in) = fluoride(out). Its activity is regulated as follows. Na(+) is not transported, but it plays an essential structural role and its presence is essential for fluoride channel function. Its function is as follows. Fluoride-specific ion channel. Important for reducing fluoride concentration in the cell, thus reducing its toxicity. The polypeptide is Fluoride-specific ion channel FluC (Neisseria meningitidis serogroup C / serotype 2a (strain ATCC 700532 / DSM 15464 / FAM18)).